The chain runs to 714 residues: Fatty acid oxidation complex subunit alpha (714 aa).

An enoyl-CoA hydratase region spans residues Met-1 to Pro-190. A 3-hydroxyacyl-CoA dehydrogenase region spans residues Ala-306–Gln-714.

In the N-terminal section; belongs to the enoyl-CoA hydratase/isomerase family. The protein in the central section; belongs to the 3-hydroxyacyl-CoA dehydrogenase family. In terms of assembly, heterotetramer of two alpha chains (FadJ) and two beta chains (FadI).

Its subcellular location is the cytoplasm. It catalyses the reaction a (3S)-3-hydroxyacyl-CoA = a (2E)-enoyl-CoA + H2O. It carries out the reaction a 4-saturated-(3S)-3-hydroxyacyl-CoA = a (3E)-enoyl-CoA + H2O. The catalysed reaction is a (3S)-3-hydroxyacyl-CoA + NAD(+) = a 3-oxoacyl-CoA + NADH + H(+). The enzyme catalyses (3S)-3-hydroxybutanoyl-CoA = (3R)-3-hydroxybutanoyl-CoA. Its pathway is lipid metabolism; fatty acid beta-oxidation. Functionally, catalyzes the formation of a hydroxyacyl-CoA by addition of water on enoyl-CoA. Also exhibits 3-hydroxyacyl-CoA epimerase and 3-hydroxyacyl-CoA dehydrogenase activities. The sequence is that of Fatty acid oxidation complex subunit alpha from Escherichia coli O7:K1 (strain IAI39 / ExPEC).